Here is a 439-residue protein sequence, read N- to C-terminus: uncharacterized protein (439 aa).

CBS domains lie at Leu-195–Lys-254 and Met-256–Gln-314.

This is an uncharacterized protein from Bacillus subtilis (strain 168).